The chain runs to 465 residues: A-type ATP synthase subunit B (465 aa).

This sequence belongs to the ATPase alpha/beta chains family. As to quaternary structure, has multiple subunits with at least A(3), B(3), C, D, E, F, H, I and proteolipid K(x).

It is found in the cell membrane. In terms of biological role, component of the A-type ATP synthase that produces ATP from ADP in the presence of a proton gradient across the membrane. The B chain is a regulatory subunit. The polypeptide is A-type ATP synthase subunit B (Pyrococcus horikoshii (strain ATCC 700860 / DSM 12428 / JCM 9974 / NBRC 100139 / OT-3)).